The following is an 84-amino-acid chain: Small ribosomal subunit protein uS17 (84 aa).

The protein belongs to the universal ribosomal protein uS17 family. As to quaternary structure, part of the 30S ribosomal subunit.

One of the primary rRNA binding proteins, it binds specifically to the 5'-end of 16S ribosomal RNA. The polypeptide is Small ribosomal subunit protein uS17 (Vibrio atlanticus (strain LGP32) (Vibrio splendidus (strain Mel32))).